Consider the following 419-residue polypeptide: Tryptophan synthase beta chain (419 aa).

The residue at position 86 (K86) is an N6-(pyridoxal phosphate)lysine. Residues 394–403 show a composition bias toward basic and acidic residues; sequence VEQQKVEQQK. A disordered region spans residues 394–419; it reads VEQQKVEQQKADNQNTEKNNQESGNE. A compositionally biased stretch (polar residues) spans 404–419; sequence ADNQNTEKNNQESGNE.

It belongs to the TrpB family. In terms of assembly, tetramer of two alpha and two beta chains. Requires pyridoxal 5'-phosphate as cofactor.

The enzyme catalyses (1S,2R)-1-C-(indol-3-yl)glycerol 3-phosphate + L-serine = D-glyceraldehyde 3-phosphate + L-tryptophan + H2O. Its pathway is amino-acid biosynthesis; L-tryptophan biosynthesis; L-tryptophan from chorismate: step 5/5. The beta subunit is responsible for the synthesis of L-tryptophan from indole and L-serine. This Shewanella halifaxensis (strain HAW-EB4) protein is Tryptophan synthase beta chain.